The sequence spans 204 residues: Small ribosomal subunit protein eS8 (204 aa).

The protein belongs to the eukaryotic ribosomal protein eS8 family.

This is Small ribosomal subunit protein eS8 (RPS8) from Griffithsia japonica (Red alga).